The chain runs to 243 residues: uncharacterized protein (243 aa).

Transmembrane regions (helical) follow at residues 38–58 (AYFLFLLSFFVTAVMFLVGIF), 99–119 (FGIAILALGLFSLFLMIFLGY), 143–163 (FYFSVVAYCFWIALMLLFLVL), and 204–224 (AFATALCITLVVYELPFLGLF).

It is found in the cell membrane. This is an uncharacterized protein from Mycoplasma pneumoniae (strain ATCC 29342 / M129 / Subtype 1) (Mycoplasmoides pneumoniae).